A 383-amino-acid chain; its full sequence is tRNA(Met) cytidine acetate ligase (383 aa).

ATP contacts are provided by residues 7–20 (ISEYNPFHNGHLYQ), glycine 102, asparagine 160, and 181–182 (RI).

It belongs to the TmcAL family.

The protein resides in the cytoplasm. The enzyme catalyses cytidine(34) in elongator tRNA(Met) + acetate + ATP = N(4)-acetylcytidine(34) in elongator tRNA(Met) + AMP + diphosphate. Functionally, catalyzes the formation of N(4)-acetylcytidine (ac(4)C) at the wobble position of elongator tRNA(Met), using acetate and ATP as substrates. First activates an acetate ion to form acetyladenylate (Ac-AMP) and then transfers the acetyl group to tRNA to form ac(4)C34. The chain is tRNA(Met) cytidine acetate ligase from Exiguobacterium sibiricum (strain DSM 17290 / CCUG 55495 / CIP 109462 / JCM 13490 / 255-15).